The primary structure comprises 61 residues: Large ribosomal subunit protein bL32 (61 aa).

Basic residues predominate over residues 1 to 16 (MAVPKRKTSPSKRGMR). A disordered region spans residues 1–40 (MAVPKRKTSPSKRGMRRSADALKAPTYIEDKNSGELRRPH). Positions 28-40 (IEDKNSGELRRPH) are enriched in basic and acidic residues.

The protein belongs to the bacterial ribosomal protein bL32 family.

This Sinorhizobium medicae (strain WSM419) (Ensifer medicae) protein is Large ribosomal subunit protein bL32.